A 207-amino-acid chain; its full sequence is Hepatic lectin (207 aa).

Methionine 1 carries the post-translational modification N-acetylmethionine. Topologically, residues 1–23 are cytoplasmic; that stretch reads MDEERLSDNVRLYKGGSIRQGLR. Residues 24–48 form a helical; Signal-anchor for type II membrane protein membrane-spanning segment; it reads SFAAVYVLLALSFLLLTLLSSVSLA. The Extracellular segment spans residues 49–207; that stretch reads RIAALSSKLS…YYVCEKPLPK (159 aa). Asparagine 67 carries N-linked (GlcNAc...) asparagine glycosylation. In terms of domain architecture, C-type lectin spans 77–203; sequence PCGAQSRQWE…TYECYYVCEK (127 aa). Disulfide bonds link cysteine 78/cysteine 92, cysteine 109/cysteine 201, and cysteine 179/cysteine 193.

Post-translationally, some or all of the cysteines are involved in disulfide bonds.

Its subcellular location is the membrane. Its function is as follows. Hepatic lectin is a membrane receptor protein that recognizes and binds exposed N-acetylglucosamine moieties of plasma glycoproteins, thus mediating their clearance (from the circulation) and endocytosis. The polypeptide is Hepatic lectin (Gallus gallus (Chicken)).